The following is a 137-amino-acid chain: Proofreading thioesterase EntH (137 aa).

The active-site Nucleophile or proton acceptor is Glu-63.

The protein belongs to the thioesterase PaaI family. As to quaternary structure, homotetramer. Dimer of dimers. Interacts specifically with the aryl carrier protein (ArCP) domain of EntB.

The protein resides in the cytoplasm. Its pathway is siderophore biosynthesis; enterobactin biosynthesis. Required for optimal enterobactin synthesis. Acts as a proofreading enzyme that prevents EntB misacylation by hydrolyzing the thioester bound existing between EntB and wrongly charged molecules. The polypeptide is Proofreading thioesterase EntH (Shigella sonnei (strain Ss046)).